Here is a 531-residue protein sequence, read N- to C-terminus: Isocitrate lyase (531 aa).

Substrate is bound at residue 101–103 (SGW). Asp184 is a Mg(2+) binding site. The Proton acceptor role is filled by Cys222. Substrate contacts are provided by residues 223-224 (GH), 380-384 (NNSPS), and Thr451.

The protein belongs to the isocitrate lyase/PEP mutase superfamily. Isocitrate lyase family. In terms of assembly, homotetramer. Mg(2+) serves as cofactor.

It catalyses the reaction D-threo-isocitrate = glyoxylate + succinate. It functions in the pathway carbohydrate metabolism; glyoxylate cycle; (S)-malate from isocitrate: step 1/2. Functionally, involved in the metabolic adaptation in response to environmental changes. Catalyzes the reversible formation of succinate and glyoxylate from isocitrate, a key step of the glyoxylate cycle, which operates as an anaplerotic route for replenishing the tricarboxylic acid cycle during growth on fatty acid substrates. The polypeptide is Isocitrate lyase (Pseudomonas aeruginosa (strain ATCC 15692 / DSM 22644 / CIP 104116 / JCM 14847 / LMG 12228 / 1C / PRS 101 / PAO1)).